The following is a 178-amino-acid chain: Interleukin-1 receptor antagonist protein (178 aa).

The first 26 residues, 1-26, serve as a signal peptide directing secretion; that stretch reads MEICWGPYSHLISLLLILLFHSEAAC. A disulfide bridge links C92 with C142. N110 carries an N-linked (GlcNAc...) asparagine glycan.

It belongs to the IL-1 family.

Its subcellular location is the secreted. It localises to the cytoplasm. Anti-inflammatory antagonist of interleukin-1 family of proinflammatory cytokines such as interleukin-1beta/IL1B and interleukin-1alpha/IL1A. Protects from immune dysregulation and uncontrolled systemic inflammation triggered by IL1 for a range of innate stimulatory agents such as pathogens. This chain is Interleukin-1 receptor antagonist protein (Il1rn), found in Mus musculus (Mouse).